Consider the following 92-residue polypeptide: MSSRKSRSRQTGASMITDEQINDLVLQLHRLLPELANNRRSGKVSASRVLQETCSYIRNLSKEVDDLSERLSQLLESTDSAQAALIRSLLMQ.

The bHLH domain maps to 5–60 (KSRSRQTGASMITDEQINDLVLQLHRLLPELANNRRSGKVSASRVLQETCSYIRNL).

This sequence belongs to the bHLH protein family. In terms of assembly, interacts with HFR1 and IBH1. Expressed in roots, leaves, stems and flowers.

The protein localises to the nucleus. Its function is as follows. Atypical and probable non DNA-binding bHLH transcription factor that integrates multiple signaling pathways to regulate cell elongation and plant development. Regulates light responses by binding and inhibiting the activity of the bHLH transcription factor HFR1, a critical regulator of light signaling and shade avoidance. May have a regulatory role in various aspects of gibberellin-dependent growth and development. The protein is Transcription factor PRE4 (PRE4) of Arabidopsis thaliana (Mouse-ear cress).